We begin with the raw amino-acid sequence, 322 residues long: 4-hydroxythreonine-4-phosphate dehydrogenase (322 aa).

Positions 126 and 127 each coordinate substrate. Residues His160, His205, and His260 each contribute to the a divalent metal cation site. 3 residues coordinate substrate: Lys268, Asn277, and Arg286.

It belongs to the PdxA family. Homodimer. Zn(2+) serves as cofactor. Requires Mg(2+) as cofactor. It depends on Co(2+) as a cofactor.

It localises to the cytoplasm. It catalyses the reaction 4-(phosphooxy)-L-threonine + NAD(+) = 3-amino-2-oxopropyl phosphate + CO2 + NADH. It functions in the pathway cofactor biosynthesis; pyridoxine 5'-phosphate biosynthesis; pyridoxine 5'-phosphate from D-erythrose 4-phosphate: step 4/5. Catalyzes the NAD(P)-dependent oxidation of 4-(phosphooxy)-L-threonine (HTP) into 2-amino-3-oxo-4-(phosphooxy)butyric acid which spontaneously decarboxylates to form 3-amino-2-oxopropyl phosphate (AHAP). This chain is 4-hydroxythreonine-4-phosphate dehydrogenase, found in Paracoccus denitrificans (strain Pd 1222).